The following is a 442-amino-acid chain: MFS transporter asaE (442 aa).

Over residues 1–10 (MDRSRTSSQG) the composition is skewed to polar residues. The segment at 1–43 (MDRSRTSSQGRDVLPPRGDEGRISPSLDKEKSPGPEDQPDAPP) is disordered. A compositionally biased stretch (basic and acidic residues) spans 17–34 (RGDEGRISPSLDKEKSPG). The next 12 membrane-spanning stretches (helical) occupy residues 47–67 (LTAWLVVVGAWCTSFCSFGWV), 89–109 (TISWIPSLQIFFMFAMGPIVG), 119–139 (YLIIGGTFFHVFGLMMASIST), 150–170 (ICSAIGAAAIFQPALSAVSAW), 177–197 (IAFATLSTGSSVGGVIFPIMV), 206–226 (FGWSMRISAFMILFLLGIAIV), 252–272 (PVFIVTLLGYMLLTYGVFIPI), 288–307 (LASYLVPMLNGASLFGRLGA), 319–339 (IFIVMCIVAGVLVLALWIPAT), 342–362 (APIIVFATLFGFASGAYVSLS), 381–401 (LLFLFASVGGLTTSPIAGAIL), and 413–433 (IFSGVMLLGGTAFIITARIVG).

This sequence belongs to the major facilitator superfamily. Monocarboxylate porter (TC 2.A.1.13) family.

Its subcellular location is the cell membrane. The protein operates within secondary metabolite biosynthesis. Functionally, MFS transporter; part of the gene cluster that mediates the biosynthesis of aspergillic acid. Probably involved in aspergillic acid metabolism and transport. In Aspergillus flavus (strain ATCC 200026 / FGSC A1120 / IAM 13836 / NRRL 3357 / JCM 12722 / SRRC 167), this protein is MFS transporter asaE.